The chain runs to 574 residues: Septation ring formation regulator EzrA (574 aa).

Over 1–7 (MSIGLVI) the chain is Extracellular. A helical membrane pass occupies residues 8–26 (LVAVVALLLVVGYGTAVLM). 5 coiled-coil regions span residues 26-47 (MRKR…LYNL), 105-189 (KAKH…QFVT), 258-346 (ESRF…FLIS), 375-415 (SETK…IEKD), and 455-494 (STSN…LEEE). Residues 27-574 (RKRNEALLQN…YEKTRENIRF (548 aa)) are Cytoplasmic-facing.

The protein belongs to the EzrA family.

The protein resides in the cell membrane. Functionally, negative regulator of FtsZ ring formation; modulates the frequency and position of FtsZ ring formation. Inhibits FtsZ ring formation at polar sites. Interacts either with FtsZ or with one of its binding partners to promote depolymerization. This chain is Septation ring formation regulator EzrA, found in Streptococcus sanguinis (strain SK36).